A 163-amino-acid chain; its full sequence is 6,7-dimethyl-8-ribityllumazine synthase (163 aa).

5-amino-6-(D-ribitylamino)uracil contacts are provided by residues Phe-27, 58–60, and 87–89; these read ALE and CVI. Residue 92-93 coordinates (2S)-2-hydroxy-3-oxobutyl phosphate; sequence DT. His-95 functions as the Proton donor in the catalytic mechanism. Residue Asn-120 coordinates 5-amino-6-(D-ribitylamino)uracil. Arg-134 is a (2S)-2-hydroxy-3-oxobutyl phosphate binding site.

It belongs to the DMRL synthase family.

The enzyme catalyses (2S)-2-hydroxy-3-oxobutyl phosphate + 5-amino-6-(D-ribitylamino)uracil = 6,7-dimethyl-8-(1-D-ribityl)lumazine + phosphate + 2 H2O + H(+). It functions in the pathway cofactor biosynthesis; riboflavin biosynthesis; riboflavin from 2-hydroxy-3-oxobutyl phosphate and 5-amino-6-(D-ribitylamino)uracil: step 1/2. Its function is as follows. Catalyzes the formation of 6,7-dimethyl-8-ribityllumazine by condensation of 5-amino-6-(D-ribitylamino)uracil with 3,4-dihydroxy-2-butanone 4-phosphate. This is the penultimate step in the biosynthesis of riboflavin. In Afipia carboxidovorans (strain ATCC 49405 / DSM 1227 / KCTC 32145 / OM5) (Oligotropha carboxidovorans), this protein is 6,7-dimethyl-8-ribityllumazine synthase.